The chain runs to 557 residues: Nucleolin 1 (557 aa).

Disordered regions lie at residues 1–297 (MGKS…GGSK), 376–398 (GERG…GDGG), and 474–557 (LVVD…FGDE). Residues 49 to 63 (QKEKAVKKVPKKVES) show a composition bias toward basic and acidic residues. Composition is skewed to acidic residues over residues 64–74 (SDDSDSESEEE), 91–101 (ESSDDSSSDDE), and 124–135 (SSSDDDSSDEEV). Low complexity predominate over residues 174-184 (AKIAKPAAKDS). Residues 186-197 (SSDDDSDEDSED) are compositionally biased toward acidic residues. Over residues 203–217 (KKAAPAAAKAASSSD) the composition is skewed to low complexity. Positions 218–229 (SSDEDSDEESED) are enriched in acidic residues. The span at 230-247 (EKPAQKKADTKASKKSSS) shows a compositional bias: basic and acidic residues. The span at 249 to 263 (ESSESEEDESEDEEE) shows a compositional bias: acidic residues. The segment covering 264–281 (TPKKKSSDVEMVDAEKSS) has biased composition (basic and acidic residues). The region spanning 297-374 (KTLFAANLSF…REIRLDIAQE (78 aa)) is the RRM 1 domain. The RRM 2 domain occupies 401–481 (KKIFVKGFDA…FYLVVDEPRP (81 aa)). Positions 485–503 (SSGGGGFGRGNGRFGSGGG) are enriched in gly residues.

As to quaternary structure, interacts with THAL in the nucleus. As to expression, expressed in roots, leaves, shoots and flowers.

It localises to the nucleus. The protein resides in the nucleolus. Its function is as follows. Involved in pre-rRNA processing and ribosome assembly. Is associated with intranucleolar chromatin and pre-ribosomal particles and plays a role in controlling activation and repression of a specific subset of rRNA genes located in distinctive nucleolar organizer regions. Binds specifically rDNA chromatin and may be required to maintain rDNA chromatin structure, but is probably not required for the overall histone methylation status of 45S rRNA genes. Involved in leaf polarity establishment by functioning cooperatively with AS1 to repress abaxial genes ARF3, ARF4, KAN1, KAN2, YAB1 and YAB5, and the knox homeobox genes KNAT1, KNAT2, KNAT6, and STM to promote adaxial development in leaf primordia at shoot apical meristems at high temperatures. This is Nucleolin 1 from Arabidopsis thaliana (Mouse-ear cress).